A 377-amino-acid chain; its full sequence is Phytanoyl-CoA hydroxylase-interacting protein-like (377 aa).

Residues 52 to 161 (VPQNIKISNI…EINEFCTADY (110 aa)) form the Fibronectin type-III domain.

Belongs to the PHYHIP family.

In terms of biological role, may play a role in the development of the central system. This chain is Phytanoyl-CoA hydroxylase-interacting protein-like (phyhipl), found in Danio rerio (Zebrafish).